The primary structure comprises 1157 residues: Voltage-dependent calcium channel subunit alpha-2/delta-2 (1157 aa).

Positions 1 to 18 (MAVPARTCGASWPGPVRT) are cleaved as a signal peptide. The segment at 1–37 (MAVPARTCGASWPGPVRTARPWPGRGPRPCPDPRGPA) is disordered. Residues 19–1119 (ARPWPGRGPR…TEDTSDCGRG (1101 aa)) lie on the Extracellular side of the membrane. A compositionally biased stretch (pro residues) spans 24–34 (GRGPRPCPDPR). The N-linked (GlcNAc...) asparagine glycan is linked to Asn205. Residues 294 to 472 (DMVIIVDVSG…INTQEYLDVL (179 aa)) form the VWFA domain. A divalent metal cation-binding residues include Asp300, Ser302, and Ser304. The MIDAS-like motif signature appears at 300–304 (DVSGS). Residues Asn389, Asn421, Asn510, Asn543, Asn627, and Asn864 are each glycosylated (N-linked (GlcNAc...) asparagine). A disulfide bridge links Cys446 with Cys1104. The Cache domain occupies 488-577 (WTNVYEDALG…KPQITNFREP (90 aa)). Residues 1120–1140 (ASFPPSLGVLVSLQLLLLLGL) form a helical membrane-spanning segment. The Cytoplasmic segment spans residues 1141–1157 (PPRPQPQIHSFTPSRRL).

It belongs to the calcium channel subunit alpha-2/delta family. In terms of assembly, dimer formed of alpha-2-2 and delta-2 chains; disulfide-linked. Voltage-dependent calcium channels are multisubunit complexes, consisting of alpha-1 (CACNA1), alpha-2 (CACNA2D), beta (CACNB) and delta (CACNA2D) subunits in a 1:1:1:1 ratio. N-glycosylated. In terms of processing, may be proteolytically processed into subunits alpha-2-2 and delta-2 that are disulfide-linked. It is however unclear whether such cleavage really takes place in vivo and has a functional role. As to expression, in heart, it is highly expressed in atrium and at lower level in ventricle.

The protein resides in the membrane. The alpha-2/delta subunit of voltage-dependent calcium channels regulates calcium current density and activation/inactivation kinetics of the calcium channel. Acts as a regulatory subunit for P/Q-type calcium channel (CACNA1A), N-type (CACNA1B), L-type (CACNA1C OR CACNA1D) and possibly T-type (CACNA1G). Overexpression induces apoptosis. This Rattus norvegicus (Rat) protein is Voltage-dependent calcium channel subunit alpha-2/delta-2 (Cacna2d2).